We begin with the raw amino-acid sequence, 107 residues long: uncharacterized protein (107 aa).

This is an uncharacterized protein from Yersinia pseudotuberculosis serotype I (strain IP32953).